The sequence spans 190 residues: Protein GrpE (190 aa).

The disordered stretch occupies residues 21–49 (DDLQEEVEATETEETVEEVIEETPEKSEL). Positions 23-42 (LQEEVEATETEETVEEVIEE) are enriched in acidic residues.

Belongs to the GrpE family. Homodimer.

The protein localises to the cytoplasm. Functionally, participates actively in the response to hyperosmotic and heat shock by preventing the aggregation of stress-denatured proteins, in association with DnaK and GrpE. It is the nucleotide exchange factor for DnaK and may function as a thermosensor. Unfolded proteins bind initially to DnaJ; upon interaction with the DnaJ-bound protein, DnaK hydrolyzes its bound ATP, resulting in the formation of a stable complex. GrpE releases ADP from DnaK; ATP binding to DnaK triggers the release of the substrate protein, thus completing the reaction cycle. Several rounds of ATP-dependent interactions between DnaJ, DnaK and GrpE are required for fully efficient folding. This chain is Protein GrpE, found in Streptococcus pyogenes serotype M3 (strain SSI-1).